We begin with the raw amino-acid sequence, 274 residues long: Probable glycerophosphodiester phosphodiesterase 1 (274 aa).

The region spanning 12 to 264 is the GP-PDE domain; the sequence is PFVVAHRGAS…HHPGRTKAWL (253 aa). His-17 functions as the Proton acceptor in the catalytic mechanism. Residues Glu-44 and Asp-46 each coordinate Ca(2+). His-59 functions as the Proton donor in the catalytic mechanism. Glu-126 contributes to the Ca(2+) binding site.

Belongs to the glycerophosphoryl diester phosphodiesterase family. Ca(2+) serves as cofactor.

The enzyme catalyses a sn-glycero-3-phosphodiester + H2O = an alcohol + sn-glycerol 3-phosphate + H(+). Its function is as follows. Glycerophosphodiester phosphodiesterase hydrolyzes glycerophosphodiesters into glycerol-3-phosphate (G3P) and the corresponding alcohol. This chain is Probable glycerophosphodiester phosphodiesterase 1 (glpQ1), found in Mycobacterium tuberculosis (strain CDC 1551 / Oshkosh).